The sequence spans 191 residues: Transcription factor FapR (191 aa).

The region spanning 102–169 (GIARGHHLFA…RILVTSHVNQ (68 aa)) is the MaoC-like domain.

This sequence belongs to the FapR family.

In terms of biological role, transcriptional factor involved in regulation of membrane lipid biosynthesis by repressing genes involved in fatty acid and phospholipid metabolism. The protein is Transcription factor FapR of Shouchella clausii (strain KSM-K16) (Alkalihalobacillus clausii).